Consider the following 450-residue polypeptide: Exodeoxyribonuclease 7 large subunit (450 aa).

Belongs to the XseA family. Heterooligomer composed of large and small subunits.

It is found in the cytoplasm. The enzyme catalyses Exonucleolytic cleavage in either 5'- to 3'- or 3'- to 5'-direction to yield nucleoside 5'-phosphates.. Bidirectionally degrades single-stranded DNA into large acid-insoluble oligonucleotides, which are then degraded further into small acid-soluble oligonucleotides. This is Exodeoxyribonuclease 7 large subunit from Listeria welshimeri serovar 6b (strain ATCC 35897 / DSM 20650 / CCUG 15529 / CIP 8149 / NCTC 11857 / SLCC 5334 / V8).